A 142-amino-acid polypeptide reads, in one-letter code: Ribosome-binding factor A (142 aa).

The segment at 118 to 142 (DEAKQQEHGTVENAKQDGDKAEDDK) is disordered.

It belongs to the RbfA family. In terms of assembly, monomer. Binds 30S ribosomal subunits, but not 50S ribosomal subunits or 70S ribosomes.

It localises to the cytoplasm. In terms of biological role, one of several proteins that assist in the late maturation steps of the functional core of the 30S ribosomal subunit. Associates with free 30S ribosomal subunits (but not with 30S subunits that are part of 70S ribosomes or polysomes). Required for efficient processing of 16S rRNA. May interact with the 5'-terminal helix region of 16S rRNA. The polypeptide is Ribosome-binding factor A (Shewanella piezotolerans (strain WP3 / JCM 13877)).